Reading from the N-terminus, the 256-residue chain is CD209 antigen-like protein 2 (256 aa).

The Cytoplasmic portion of the chain corresponds to methionine 1–alanine 50. Positions leucine 14 to leucine 15 match the Endocytosis signal motif. A helical; Signal-anchor for type II membrane protein membrane pass occupies residues proline 51–valine 71. At glutamine 72–glutamate 240 the chain is on the extracellular side. 3 disulfide bridges follow: cysteine 108-cysteine 119, cysteine 136-cysteine 229, and cysteine 208-cysteine 221. The C-type lectin domain maps to phenylalanine 114–lysine 230. Glutamate 199, asparagine 201, isoleucine 203, glutamate 206, asparagine 217, and aspartate 218 together coordinate Ca(2+).

As to expression, predominantly expressed in liver and axillary lymph nodes. At very low levels also found in other tissues.

The protein localises to the membrane. Functionally, probable pathogen-recognition receptor involved in peripheral immune surveillance in liver. May mediate the endocytosis of pathogens which are subsequently degraded in lysosomal compartments. Probably recognizes in a calcium-dependent manner high mannose N-linked oligosaccharides in a variety of pathogen antigens. Is a receptor for ICAM3, probably by binding to mannose-like carbohydrates. In Macaca mulatta (Rhesus macaque), this protein is CD209 antigen-like protein 2 (CD209L2).